Consider the following 107-residue polypeptide: Iron-binding protein IscA (107 aa).

Fe cation is bound by residues Cys-35, Cys-99, and Cys-101.

The protein belongs to the HesB/IscA family. Homodimer; may form tetramers and higher multimers. Fe cation is required as a cofactor.

Functionally, is able to transfer iron-sulfur clusters to apo-ferredoxin. Multiple cycles of [2Fe2S] cluster formation and transfer are observed, suggesting that IscA acts catalytically. Recruits intracellular free iron so as to provide iron for the assembly of transient iron-sulfur cluster in IscU in the presence of IscS, L-cysteine and the thioredoxin reductase system TrxA/TrxB. In Xenorhabdus nematophila (strain ATCC 19061 / DSM 3370 / CCUG 14189 / LMG 1036 / NCIMB 9965 / AN6), this protein is Iron-binding protein IscA.